Consider the following 456-residue polypeptide: MNSRLQEIRARQTLRRKLLAQQLGAESADSIGAVLNSKDEQREIAETRETSRASYDTSAAVSKRKLPEEGKADEEVVQECKDSVEPQKEEENLPYREEIYKDSSTFLKGTQSLNPHNDYCQHFVDTGHRPQNFIRDVGLADRFEEYPKLRELIRLKDELIAKSNTPPMYLQADLETFDLRELKSEFDVILLEPPLEEYFRETGIAANEKWWTWEDIMKLDIEGIAGSRAFVFLWCGSGEGLDFGRMCLRKWGFRRSEDICWIKTNKDNPGKTKTLDPKAIFQRTKEHCLMGIKGTVHRSTDGDFIHANVDIDLIITEEPEIGNIEKPVEIFHIIEHFCLGRRRLHLFGRDSTIRPGWLTVGPTLTNSNFNSETYASYFNTPNSPLTGCTEEIERLRPKTPPPKSDRGFGASRGGGRGGASAGRGERGRERNRGSFRGDRGNFRGRGGPHRGVFAPR.

The disordered stretch occupies residues glutamate 43–glutamate 74. The span at lysine 65 to glutamate 74 shows a compositional bias: basic and acidic residues. 2 interaction with METTL3 regions span residues arginine 135–aspartate 136 and serine 237–glycine 238. A positively charged region required for RNA-binding region spans residues arginine 245 to arginine 254. 2 interaction with METTL3 regions span residues arginine 255–aspartate 258 and lysine 278–histidine 287. The positively charged region required for RNA-binding stretch occupies residues histidine 297–arginine 298. The tract at residues asparagine 308–aspartate 312 is interaction with METTL3. Residues leucine 395–arginine 456 are disordered. Residues alanine 410 to alanine 421 are compositionally biased toward gly residues. The segment covering arginine 423 to asparagine 441 has biased composition (basic and acidic residues).

This sequence belongs to the MT-A70-like family. As to quaternary structure, heterodimer; heterodimerizes with mettl3 to form an antiparallel heterodimer that constitutes an active methyltransferase. Component of the WMM complex, a N6-methyltransferase complex composed of a catalytic subcomplex, named MAC, and of an associated subcomplex, named MACOM. The MAC subcomplex is composed of mettl3 and mettl14.

The protein localises to the nucleus. The METTL3-METTL14 heterodimer forms a N6-methyltransferase complex that methylates adenosine residues at the N(6) position of some mRNAs and regulates the circadian clock, differentiation of embryonic stem cells and cortical neurogenesis. In the heterodimer formed with mettl3, mettl14 constitutes the RNA-binding scaffold that recognizes the substrate rather than the catalytic core. N6-methyladenosine (m6A), which takes place at the 5'-[AG]GAC-3' consensus sites of some mRNAs, plays a role in mRNA stability and processing. In Xenopus laevis (African clawed frog), this protein is N(6)-adenosine-methyltransferase non-catalytic subunit METTL14 (mettl14).